The sequence spans 1123 residues: Eukaryotic translation initiation factor 2-alpha kinase PK4 (1123 aa).

A disordered region spans residues 1–30; sequence MKKRIRSSYKVGSSNKYHKKNYTDNEKDKK. Positions 21 to 30 are enriched in basic and acidic residues; sequence NYTDNEKDKK. Residues 245 to 253 and lysine 270 contribute to the ATP site; that span reads IGQGGFGSV. 3 disordered regions span residues 409-493, 572-609, and 742-800; these read FYSD…NDEG, RNED…NELD, and ENDD…DDDI. A compositionally biased stretch (basic and acidic residues) spans 419-428; the sequence is KNKENPEKNH. Residues 455–477 show a composition bias toward basic residues; the sequence is HKLKKRKNKKKKSKKKRKSKSKI. 5 tandem repeats follow at residues 576–582, 583–589, 590–596, 597–603, and 604–610. Residues 576–610 are 5 X 7 AA tandem repeat of D-K-N-[GE]-L-D-[GD]; it reads DKNGLDGDKNGLDGDKNGLDGDKNGLDGDKNELDD. The Protein kinase domain maps to 678–1049; the sequence is TNVESINTNG…KIKVLLDPHL (372 aa). Residues 743-754 show a composition bias toward acidic residues; the sequence is NDDDDDDDDDDN. Residue aspartate 886 is the Proton acceptor of the active site. Threonine 953 is subject to Phosphothreonine.

This sequence belongs to the protein kinase superfamily. Ser/Thr protein kinase family. GCN2 subfamily. As to quaternary structure, may form oligomers in response to stress; oligomerization may result in catalytic activity. Interacts with BIP; the interaction is disrupted in response to stress. Post-translationally, auto-phosphorylated.

The protein resides in the endoplasmic reticulum membrane. It carries out the reaction L-seryl-[protein] + ATP = O-phospho-L-seryl-[protein] + ADP + H(+). It catalyses the reaction L-threonyl-[protein] + ATP = O-phospho-L-threonyl-[protein] + ADP + H(+). Dissociation from BIP and oligomerization, may results autophosphorylation and kinase activity induction. Functionally, during the asexual blood stage, phosphorylates translation factor eIF2alpha in late schizonts resulting in protein translation inhibition. Plays a role in trophozoite differentiation into schizonts. In Plasmodium falciparum, this protein is Eukaryotic translation initiation factor 2-alpha kinase PK4.